A 386-amino-acid polypeptide reads, in one-letter code: Succinate--CoA ligase [ADP-forming] subunit beta (386 aa).

In terms of domain architecture, ATP-grasp spans 9–244; sequence KEVLRKYGVV…LDEEDADEIE (236 aa). ATP contacts are provided by residues lysine 46, 53–55, glutamate 99, alanine 102, and glutamate 107; that span reads GRG. Positions 199 and 213 each coordinate Mg(2+). Residues asparagine 264 and 321–323 contribute to the substrate site; that span reads GIM.

The protein belongs to the succinate/malate CoA ligase beta subunit family. Heterotetramer of two alpha and two beta subunits. Mg(2+) is required as a cofactor.

It catalyses the reaction succinate + ATP + CoA = succinyl-CoA + ADP + phosphate. The catalysed reaction is GTP + succinate + CoA = succinyl-CoA + GDP + phosphate. The protein operates within carbohydrate metabolism; tricarboxylic acid cycle; succinate from succinyl-CoA (ligase route): step 1/1. In terms of biological role, succinyl-CoA synthetase functions in the citric acid cycle (TCA), coupling the hydrolysis of succinyl-CoA to the synthesis of either ATP or GTP and thus represents the only step of substrate-level phosphorylation in the TCA. The beta subunit provides nucleotide specificity of the enzyme and binds the substrate succinate, while the binding sites for coenzyme A and phosphate are found in the alpha subunit. The sequence is that of Succinate--CoA ligase [ADP-forming] subunit beta from Azoarcus sp. (strain BH72).